The sequence spans 1357 residues: MAYSYTEKKRIRKDFSKLPDVMDVPYLLAIQLDSYREFLQAGASKDQFRDVGLHAAFKSVFPIISYSGNAALEYVGYRLGEPAFDVKECVLRGVTFAVPLRVKVRLIIFDKESSNKAIKDIKEQEVYMGEIPLMTENGTFVINGTERVIVSQLHRSPGVFFDHDRGKTHSSGKLLYSARIIPYRGSWLDFEFDPKDCVFVRIDRRRKLPASVLLRALGYSTEEVLNTFYTTNVFHISGEKLSLELVPQRLRGEVAVMDIHDETGKVIVEQGRRITARHVNQLEKAGVNQLDVPMEYVLGRTTAKAIVHPATGEIIAECNTELTTELLIKIAKAQVVRIETLYTNDIDCGPFISDTLKIDTTSNQLEALVEIYRMMRPGEPPTKDAAETLFNNLFFSAERYDLSAVGRMKFNRRIGRTEIEGSGVLSKEDIVEVLKTLVDIRNGKGIVDDIDHLGNRRVRCVGEMAENQFRVGLVRVERAVKERLSMAESEGLMPQDLINAKPVAAAVKEFFGSSQLSQFMDQNNPLSEITHKRRVSALGPGGLTRERAGFEVRDVHPTHYGRVCPIETPEGPNIGLINSLAAYARTNQYGFLESPYRVVKEGVVSDDIVFLSAIEEADHVIAQASAAMNDKKQLIDELVAVRHLNEFTVKAPEDVTLMDVSPKQVVSVAASLIPFLEHDDANRALMGSNMQRQAVPTLRADKPLVGTGMERNVARDSGVCVVARRGGVIDSVDASRIVVRVADDEVETGEAGVDIYNLTKYTRSNQNTCINQRPLVSKGDKVARGDIMADGPSTDMGELALGQNMRIAFMAWNGFNFEDSICLSERVVQEDRFTTIHIQELTCVARDTKLGPEEITADIPNVGEAALNKLDEAGIVYVGAEVGAGDILVGKVTPKGETQLTPEEKLLRAIFGEKASDVKDTSLRVPTGTKGTVIDVQVFTRDGVERDSRALAIEKMQLDEIRKDLNEEFRIVEGATFERLRSALNGQVVDGGAGLKKGTVITDEVLDGLEHGQWFKLRMAEDALNEQLEKAQQYIVDRRRLLDDKFEDKKRKLQQGDDLAPGVLKIVKVYLAIRRRIQPGDKMAGRHGNKGVVSVIMPVEDMPHDANGTPVDVVLNPLGVPSRMNVGQILETHLGLAAKGLGEKIDRMIEEQRKAAELRGFLTEIYNEIGGRQENLEEFTDEEILALAHNLKKGVPMATPVFDGAKEREIKAMLKLADLPESGQMVLFDGRTGNKFERPVTVGYMYMLKLNHLVDDKMHARSTGSYSLVTQQPLGGKAQFGGQRFGEMEVWALEAYGAAYTLQEMLTVKSDDVNGRTKMYKNIVDGDHRMEPGMPESFNVLIKEIRSLGIDIDLETE.

The protein belongs to the RNA polymerase beta chain family. The RNAP catalytic core consists of 2 alpha, 1 beta, 1 beta' and 1 omega subunit. When a sigma factor is associated with the core the holoenzyme is formed, which can initiate transcription.

The enzyme catalyses RNA(n) + a ribonucleoside 5'-triphosphate = RNA(n+1) + diphosphate. In terms of biological role, DNA-dependent RNA polymerase catalyzes the transcription of DNA into RNA using the four ribonucleoside triphosphates as substrates. In Pseudomonas putida (strain W619), this protein is DNA-directed RNA polymerase subunit beta.